We begin with the raw amino-acid sequence, 921 residues long: Retinoblastoma-associated protein (921 aa).

Disordered regions lie at residues 1 to 31 (MPPKPLRRAGAARSQRTSPEGGAGTASPPGG) and 603 to 634 (RSPKKKASGHPQSGTSNPDAQPSATSQTQKPQ). A compositionally biased stretch (polar residues) spans 612–634 (HPQSGTSNPDAQPSATSQTQKPQ). The Bipartite nuclear localization signal motif lies at 853-869 (KRSAEPSDAPKPLKRLR). Positions 873–921 (EGQDEADGGKHLPQESKFQQKLAEMTSTRTRMQKQKLNDGNDTSANEEK) are disordered. Residues 910-921 (NDGNDTSANEEK) show a composition bias toward polar residues.

Belongs to the retinoblastoma protein (RB) family. As to quaternary structure, interacts with and sequesters the E2F1 transcription factor, thereby inhibiting E2F1 transcription. Interacts with SUV39H1, KMT5B and KMT5C. (Microbial infection) Interacts with, and is inhibited by fowl adenovirus 1 protein GAM-1. Phosphorylated in G1, thereby releasing E2F1 which is then able to activate cell growth. Dephosphorylated at the late M phase. Phosphorylation of domain C promotes interaction between the C-terminal domain C and the Pocket domain, and thereby inhibits interactions with heterodimeric E2F/DP transcription factor complexes.

Its subcellular location is the nucleus. The protein resides in the cytoplasm. In terms of biological role, tumor suppressor that is a key regulator of the G1/S transition of the cell cycle. The hypophosphorylated form binds transcription regulators of the E2F family, preventing transcription of E2F-responsive genes. Both physically blocks E2Fs transactivating domain and recruits chromatin-modifying enzymes that actively repress transcription. Cyclin and CDK-dependent phosphorylation of RB1 induces its dissociation from E2Fs, thereby activating transcription of E2F responsive genes and triggering entry into S phase. RB1 also promotes the G0-G1 transition upon phosphorylation and activation by CDK3/cyclin-C. The sequence is that of Retinoblastoma-associated protein (RB1) from Gallus gallus (Chicken).